Here is a 134-residue protein sequence, read N- to C-terminus: Large ribosomal subunit protein uL16c (134 aa).

A disordered region spans residues 1–21 (MLSPKRTKYRKHHRGRMRGKA).

It belongs to the universal ribosomal protein uL16 family. In terms of assembly, part of the 50S ribosomal subunit.

Its subcellular location is the plastid. The protein resides in the chloroplast. The protein is Large ribosomal subunit protein uL16c of Chlorella vulgaris (Green alga).